Reading from the N-terminus, the 194-residue chain is Probable RNA polymerase sigma factor HI_1459 (194 aa).

The Polymerase core binding motif lies at 45 to 58 (DLVQEAFLSAFKNL). Positions 161–180 (SEEICQETHLTSSNLHTTLY) form a DNA-binding region, H-T-H motif.

Belongs to the sigma-70 factor family. ECF subfamily.

The polypeptide is Probable RNA polymerase sigma factor HI_1459 (Haemophilus influenzae (strain ATCC 51907 / DSM 11121 / KW20 / Rd)).